The primary structure comprises 540 residues: Sensory neuron membrane protein 1 (540 aa).

At 1–105 the chain is on the cytoplasmic side; that stretch reads MRTDDPVIGN…WIFRPDLSKP (105 aa). A helical transmembrane segment spans residues 106 to 126; sequence LTGDEMITIPHPLILGALLMV. The Extracellular portion of the chain corresponds to 127-436; that stretch reads QRDREAMMPL…YTLFLGLRFN (310 aa). Asparagine 193 and asparagine 206 each carry an N-linked (GlcNAc...) asparagine glycan. 3 disulfide bridges follow: cysteine 245–cysteine 310, cysteine 274–cysteine 330, and cysteine 312–cysteine 319. N-linked (GlcNAc...) asparagine glycosylation occurs at asparagine 418. A helical membrane pass occupies residues 437–457; the sequence is TAVKWLTIIIGTIGTIVGGFM. Residues 458 to 540 lie on the Cytoplasmic side of the membrane; the sequence is HYKRTTKMVN…VTVTEMQERY (83 aa).

This sequence belongs to the CD36 family.

Its subcellular location is the cell membrane. Functionally, plays an olfactory role that is not restricted to pheromone sensitivity. This chain is Sensory neuron membrane protein 1, found in Aedes aegypti (Yellowfever mosquito).